The sequence spans 397 residues: Thioredoxin-interacting protein (397 aa).

Lysine 213 is covalently cross-linked (Glycyl lysine isopeptide (Lys-Gly) (interchain with G-Cter in ubiquitin)). Serine 362 carries the post-translational modification Phosphoserine.

It belongs to the arrestin family. As to quaternary structure, homodimer; disulfide-linked. Interacts with TXN/thioredoxin through its redox-active site. Interacts with transcriptional repressors ZBTB16, ZBTB32 and HDAC1. Interacts with DDIT4. Ubiquitinated; undergoes heterotypic 'Lys-48'-/'Lys-63'-branched polyubiquitination catalyzed by ITCH and UBR5 resulting in proteasomal degradation. Deubiquitinated by USP5, leading to TXNIP stabilization. Ubiquitously expressed.

It localises to the cytoplasm. Functionally, may act as an oxidative stress mediator by inhibiting thioredoxin activity or by limiting its bioavailability. Interacts with COPS5 and restores COPS5-induced suppression of CDKN1B stability, blocking the COPS5-mediated translocation of CDKN1B from the nucleus to the cytoplasm. Functions as a transcriptional repressor, possibly by acting as a bridge molecule between transcription factors and corepressor complexes, and over-expression will induce G0/G1 cell cycle arrest. Required for the maturation of natural killer cells. Acts as a suppressor of tumor cell growth. Inhibits the proteasomal degradation of DDIT4, and thereby contributes to the inhibition of the mammalian target of rapamycin complex 1 (mTORC1). The polypeptide is Thioredoxin-interacting protein (Txnip) (Mus musculus (Mouse)).